Consider the following 439-residue polypeptide: 23S rRNA (uracil(1939)-C(5))-methyltransferase RlmD (439 aa).

Positions 10-68 (QKKLRAAFTTIVQDLDYQGLGVAKIQGKTWFIENALPQEQVQVQVIEEKRQYGLGRVQK) constitute a TRAM domain. 4 residues coordinate [4Fe-4S] cluster: Cys81, Cys87, Cys90, and Cys168. Residues Gln271, Phe300, Asn305, Glu321, Asp348, and Asp369 each contribute to the S-adenosyl-L-methionine site. Cys395 (nucleophile) is an active-site residue.

The protein belongs to the class I-like SAM-binding methyltransferase superfamily. RNA M5U methyltransferase family. RlmD subfamily.

The catalysed reaction is uridine(1939) in 23S rRNA + S-adenosyl-L-methionine = 5-methyluridine(1939) in 23S rRNA + S-adenosyl-L-homocysteine + H(+). In terms of biological role, catalyzes the formation of 5-methyl-uridine at position 1939 (m5U1939) in 23S rRNA. This is 23S rRNA (uracil(1939)-C(5))-methyltransferase RlmD from Histophilus somni (strain 129Pt) (Haemophilus somnus).